The chain runs to 698 residues: Vertnin (698 aa).

Belongs to the vertnin family.

It is found in the nucleus. In terms of biological role, acts as a transcription factor that regulates development of thoracic vertebrae. This is Vertnin (VRTN) from Sus scrofa (Pig).